The sequence spans 354 residues: Protein OVEREXPRESSOR OF CATIONIC PEROXIDASE 3 (354 aa).

Residues asparagine 63 to serine 70 carry the Nuclear localization signal 1 motif. Disordered stretches follow at residues lysine 65 to phenylalanine 98 and threonine 151 to leucine 186. Residues valine 154–glutamate 181 show a composition bias toward acidic residues. Residues leucine 191–leucine 198 carry the Nuclear localization signal 2 motif. The tract at residues lysine 243–alanine 264 is disordered. Residues arginine 286–aspartate 345 constitute a DNA-binding region (homeobox). The Nuclear localization signal 3 motif lies at valine 293 to threonine 300.

The protein localises to the nucleus. In terms of biological role, may modulate chromatin structure by regulation of nucleosome assembly/disassembly. Homeodomain transcription factor that mediates jasmonic acid (JA)-mediated COI1-dependent and abscisic acid (ABA)-mediated PMR4-dependent resistance to infection by necrotrophic fungal pathogens (e.g. B.cinerea and P.cucumerina) and bacterial pathogens (e.g. P.syringae DC3000); this resistance involves at least callose deposition. Required for the P.fluorescens WCS417r-triggered JA-dependent induced systemic resistance (ISR) against both P.syringae DC3000 and H.arabidopsidis. Negative regulator of the ABA-dependent drought resistance. This is Protein OVEREXPRESSOR OF CATIONIC PEROXIDASE 3 from Arabidopsis thaliana (Mouse-ear cress).